We begin with the raw amino-acid sequence, 427 residues long: Serine hydroxymethyltransferase (427 aa).

Residues Leu-118 and 122–124 (GHL) each bind (6S)-5,6,7,8-tetrahydrofolate. Lys-227 is modified (N6-(pyridoxal phosphate)lysine). (6S)-5,6,7,8-tetrahydrofolate contacts are provided by residues Glu-243 and 351-353 (SPF).

It belongs to the SHMT family. In terms of assembly, homodimer. Pyridoxal 5'-phosphate serves as cofactor.

The protein resides in the cytoplasm. It carries out the reaction (6R)-5,10-methylene-5,6,7,8-tetrahydrofolate + glycine + H2O = (6S)-5,6,7,8-tetrahydrofolate + L-serine. Its pathway is one-carbon metabolism; tetrahydrofolate interconversion. The protein operates within amino-acid biosynthesis; glycine biosynthesis; glycine from L-serine: step 1/1. In terms of biological role, catalyzes the reversible interconversion of serine and glycine with tetrahydrofolate (THF) serving as the one-carbon carrier. This reaction serves as the major source of one-carbon groups required for the biosynthesis of purines, thymidylate, methionine, and other important biomolecules. Also exhibits THF-independent aldolase activity toward beta-hydroxyamino acids, producing glycine and aldehydes, via a retro-aldol mechanism. The protein is Serine hydroxymethyltransferase of Thermotoga maritima (strain ATCC 43589 / DSM 3109 / JCM 10099 / NBRC 100826 / MSB8).